The primary structure comprises 1381 residues: Protein HEG homolog 1 (1381 aa).

An N-terminal signal peptide occupies residues 1-29; that stretch reads MASPRASRWPPPLLLLLLPLLLLPPAAPG. Residues 24 to 108 are disordered; the sequence is PPAAPGTRDP…APRGGSADAA (85 aa). Positions 25-37 are enriched in pro residues; sequence PAAPGTRDPPPSP. Topologically, residues 30-1248 are extracellular; that stretch reads TRDPPPSPAR…GLNCGNPYQL (1219 aa). Residues 38–52 show a composition bias toward low complexity; the sequence is ARRALSLAPLAGAGL. The segment covering 55–74 has biased composition (basic and acidic residues); that stretch reads QLERRPEREPPPTPPRERRG. The O-linked (GalNAc...) threonine glycan is linked to Thr-67. Residues 93–105 show a composition bias toward low complexity; sequence RGPSGRAPRGGSA. Residues Asn-123, Asn-159, Asn-180, and Asn-314 are each glycosylated (N-linked (GlcNAc...) asparagine). A compositionally biased stretch (low complexity) spans 301–316; it reads DLSSSSESTEKLNNST. Disordered regions lie at residues 301 to 325 and 376 to 447; these read DLSSSSESTEKLNNSTGLQSSSVSQ and PSAV…RSVA. Over residues 424–444 the composition is skewed to polar residues; the sequence is LASSSEVQNGSPMSQTETVSR. N-linked (GlcNAc...) asparagine glycosylation is found at Asn-462, Asn-520, and Asn-610. Residues 491-529 form a disordered region; sequence STVQSGGSHTALGDRSYSESSSTSSSESLNSSAPRGERS. Residues 508–522 show a composition bias toward low complexity; it reads SESSSTSSSESLNSS. 3 disordered regions span residues 612–680, 706–757, and 774–830; these read SSYD…PLPS, SDAS…PVTS, and QTAD…TLPA. Over residues 620-648 the composition is skewed to polar residues; it reads QPSTESPVLHTSNLPSYTPTINMPNTSVV. Composition is skewed to low complexity over residues 657 to 680 and 706 to 748; these read SDSSSSSSSSSSSSSSGPPLPLPS and SDAS…PVLP. 2 stretches are compositionally biased toward polar residues: residues 774–784 and 792–809; these read QTADLKSQSTP and ESKSPSLVSLPTESTKAV. Positions 810-825 are enriched in low complexity; it reads TTNSPLPPSLTESSTE. The EGF-like 1 domain maps to 985–1023; that stretch reads SVNSCAVNPCLHNGECVADNTSRGYHCRCPPSWQGDDCS. Disulfide bonds link Cys-989/Cys-1000, Cys-994/Cys-1011, Cys-1013/Cys-1022, Cys-1029/Cys-1040, Cys-1034/Cys-1049, and Cys-1051/Cys-1062. The 39-residue stretch at 1025 to 1063 folds into the EGF-like 2; calcium-binding domain; sequence DVNECLSNPCPSTAMCNNTQGSFICKCPVGYQLEKGICN. N-linked (GlcNAc...) asparagine glycosylation occurs at Asn-1137. A helical membrane pass occupies residues 1249-1269; sequence ITVVIAAAGGGLLLILGIALI. The Cytoplasmic segment spans residues 1270–1381; it reads VTCCRKNKND…SDESRRRDYF (112 aa). Ser-1359 carries the phosphoserine modification.

In terms of assembly, interacts with CCM2 and KRIT1; KRIT1 markedly facilitates interaction with CCM2.

The protein localises to the cell membrane. It is found in the cell junction. It localises to the secreted. Functionally, receptor component of the CCM signaling pathway which is a crucial regulator of heart and vessel formation and integrity. May act through the stabilization of endothelial cell junctions. The sequence is that of Protein HEG homolog 1 (HEG1) from Homo sapiens (Human).